Consider the following 380-residue polypeptide: 1-deoxy-D-xylulose 5-phosphate reductoisomerase (380 aa).

Residues Thr-10, Gly-11, Ser-12, Ile-13, Gly-36, Arg-37, Asn-38, and Asn-120 each contribute to the NADPH site. Lys-121 contacts 1-deoxy-D-xylulose 5-phosphate. Residue Glu-122 participates in NADPH binding. Asp-146 lines the Mn(2+) pocket. Ser-147, Glu-148, Ser-172, and His-195 together coordinate 1-deoxy-D-xylulose 5-phosphate. Glu-148 provides a ligand contact to Mn(2+). Gly-201 is a binding site for NADPH. 1-deoxy-D-xylulose 5-phosphate is bound by residues Ser-208, Asn-213, Lys-214, and Glu-217. Glu-217 lines the Mn(2+) pocket.

It belongs to the DXR family. It depends on Mg(2+) as a cofactor. Requires Mn(2+) as cofactor.

The enzyme catalyses 2-C-methyl-D-erythritol 4-phosphate + NADP(+) = 1-deoxy-D-xylulose 5-phosphate + NADPH + H(+). It functions in the pathway isoprenoid biosynthesis; isopentenyl diphosphate biosynthesis via DXP pathway; isopentenyl diphosphate from 1-deoxy-D-xylulose 5-phosphate: step 1/6. Catalyzes the NADPH-dependent rearrangement and reduction of 1-deoxy-D-xylulose-5-phosphate (DXP) to 2-C-methyl-D-erythritol 4-phosphate (MEP). The chain is 1-deoxy-D-xylulose 5-phosphate reductoisomerase from Listeria monocytogenes serotype 4b (strain F2365).